Consider the following 566-residue polypeptide: MAQVKAEYDFQSQPNTGELSISAGEVLTVIRENIDGGWIEGRNVRGSVGLFPESYVTPYQASRPPPVLPPPLPPTSSGPPAASSRPFDDWGGASEVAAPPSYGAQHHHQPTPSVPEVTRSSYPSQNDDFDDEWTDEDDEQEPTRPNVQSSIGSNSRRDLSRSHSEHGGPDRGSNKVNKNINRFSNFVKSGVEAYVIGESKTTSQISERHEVVMNNGIIQWKPIQQYYTCIVDKPKKESKLKGLKSFIAYSITSSLTNIQRQVSRRYKHFDWLHEQLSAKYVLIPIPPLPEKQVAGRYEEDLIDHRKHILQLWVNKICRHPVLSQSEVWLHFISCTDEKDWKNGKRRAEKDEYIGGAFLNCITVPHQPLDPNNVDMQVERFQRSVKTSEEAMRVMQERMNMFQKVFAGPVKQNWQKMGSAFKTLQQSFEIDETVASRRLTEALAYTASEYHEIGQVFDAHTKNDMEPVLENLYSYKGTVQNVPDIIQVHKQAVQKFRDSEGRLSSAEAEKMKQRIDAMSYTVIAEVQHQTAEKVEDMKSTMGTYLKKQAMFYQEVATKLTSLAARYD.

The SH3 domain maps to 1 to 61 (MAQVKAEYDF…PESYVTPYQA (61 aa)). The disordered stretch occupies residues 59 to 179 (YQASRPPPVL…DRGSNKVNKN (121 aa)). The segment covering 63–77 (RPPPVLPPPLPPTSS) has biased composition (pro residues). Positions 127 to 140 (DDFDDEWTDEDDEQ) are enriched in acidic residues. Positions 143-154 (TRPNVQSSIGSN) are enriched in polar residues. Positions 155–173 (SRRDLSRSHSEHGGPDRGS) are enriched in basic and acidic residues. A PX domain is found at 227–339 (YTCIVDKPKK…HFISCTDEKD (113 aa)). In terms of domain architecture, BAR spans 362–566 (TVPHQPLDPN…KLTSLAARYD (205 aa)).

The protein belongs to the sorting nexin family. As to quaternary structure, homodimer. Isoform d interacts (via SH3 domain) with dyn-1. Expressed in vulval precursor cells (VPCs) and apoptotic germ cells. Colocalizes with actin, dyn-1 and rab-5 in early phagosomes.

It localises to the cytoplasm. It is found in the cytoplasmic vesicle. The protein resides in the phagosome membrane. Involved in the signaling of vulval development by acting as a negative regulator of epidermal growth factor receptor (EGFR) signaling. Aids in phagosomal membrane tubule formation which is required for phagosomal fusion with endosomes and lysosomes. Also recruits rab-7 to phagosomes by an interaction with dyn-1. These are events leading to phagosome maturation which is a step in apoptotic cell corpse clearance. Binds phosphatidylinositol-3,4,5-trisphosphate. This chain is Sorting nexin lst-4, found in Caenorhabditis elegans.